A 447-amino-acid chain; its full sequence is Serine/threonine-protein phosphatase 2A 55 kDa regulatory subunit B alpha isoform (447 aa).

A2 carries the N-acetylalanine modification. WD repeat units lie at residues Q11–H80, E94–N174, A175–K218, E227–E270, I288–V325, E347–A381, and D414–V446.

This sequence belongs to the phosphatase 2A regulatory subunit B family. In terms of assembly, PP2A consists of a common heterodimeric core enzyme, composed of a 36 kDa catalytic subunit (subunit C) and a 65 kDa constant regulatory subunit (PR65 or subunit A), that associates with a variety of regulatory subunits. Proteins that associate with the core dimer include three families of regulatory subunits B (the R2/B/PR55/B55, R3/B''/PR72/PR130/PR59 and R5/B'/B56 families), the 48 kDa variable regulatory subunit, viral proteins, and cell signaling molecules. Interacts with the PP2A C catalytic subunit PPP2CA. Interacts with the PP2A A subunit PPP2R1A. Found in a complex with at least ARL2, PPP2CB, PPP2R1A, PPP2R2A, PPP2R5E and TBCD. Interacts with MFHAS1; the interaction is direct. Interacts with PABIR1/FAM122A (via its N-terminus); the interaction is direct and inhibits PP2A activity. Interacts with ARPP19; the interaction is direct and inhibits PP2A activity. Interacts with CRTC3. As to expression, brain.

Substrate-recognition subunit of protein phosphatase 2A (PP2A) that plays a key role in cell cycle by controlling mitosis entry and exit. Involved in chromosome clustering during late mitosis by mediating dephosphorylation of MKI67. Essential for serine/threonine-protein phosphatase 2A-mediated dephosphorylation of WEE1, preventing its ubiquitin-mediated proteolysis, increasing WEE1 protein levels, and promoting the G2/M checkpoint. The sequence is that of Serine/threonine-protein phosphatase 2A 55 kDa regulatory subunit B alpha isoform (Ppp2r2a) from Rattus norvegicus (Rat).